An 88-amino-acid chain; its full sequence is Prolevitide (88 aa).

Positions 1–20 (MYKGIFLCVLFAVICANSLA) are cleaved as a signal peptide. The residue at position 74 (Gln-74) is a Pyrrolidone carboxylic acid. Gln-87 carries the post-translational modification Glutamine amide.

It belongs to the gastrin/cholecystokinin family. As to expression, expressed by the skin glands.

Its subcellular location is the secreted. This chain is Prolevitide, found in Xenopus laevis (African clawed frog).